The sequence spans 422 residues: MINPHLLDELTRRGLVAQNSDPVALADHLATPRTVYCGFDPTAGSLHIGHLVPLLMLRRFQLAGHTPVALVGGATGLIGDPSFKATERNLNSSETVQGWVASLSAQIKALLPASEGLAAPLLVNNADWMGQMSALDFLRDIGKHFSVNAMLVRESVRQRLARPDQGISFTEFSYALLQSQDYAVLNQRLGCTLQIGGNDQWGNITSGMDLTRRLHQAQVYGMTLPLITKADGTKFGKTEGGAIWLDPALTSPYAFYQFWLGTADEDVYRFLRYYSFMPLTEIEALEAEDAKRQGRKLAQQVLADELTELVHGKGALAAAQRISELLFSGEVARLGESDLAQLAQDGMPGWRIEGETDLVTLLVESGLANSKRIARELLAAGAISLNGEIRREEPLRAADRLFGRHLLLRRGKKQYRLVTWQG.

An L-tyrosine-binding site is contributed by Y36. The 'HIGH' region signature appears at 41-50; it reads PTAGSLHIGH. The L-tyrosine site is built by Y174 and Q178. The 'KMSKS' region motif lies at 234–238; it reads KFGKT. An ATP-binding site is contributed by K237. Positions 356 to 420 constitute an S4 RNA-binding domain; that stretch reads TDLVTLLVES…GKKQYRLVTW (65 aa).

It belongs to the class-I aminoacyl-tRNA synthetase family. TyrS type 1 subfamily. In terms of assembly, homodimer.

The protein localises to the cytoplasm. The enzyme catalyses tRNA(Tyr) + L-tyrosine + ATP = L-tyrosyl-tRNA(Tyr) + AMP + diphosphate + H(+). Its function is as follows. Catalyzes the attachment of tyrosine to tRNA(Tyr) in a two-step reaction: tyrosine is first activated by ATP to form Tyr-AMP and then transferred to the acceptor end of tRNA(Tyr). The protein is Tyrosine--tRNA ligase of Aeromonas hydrophila subsp. hydrophila (strain ATCC 7966 / DSM 30187 / BCRC 13018 / CCUG 14551 / JCM 1027 / KCTC 2358 / NCIMB 9240 / NCTC 8049).